Consider the following 600-residue polypeptide: Calcium/calmodulin-dependent serine/threonine-protein kinase 1 (600 aa).

Positions 1–99 are disordered; the sequence is MGLCHGKSAA…GGFKRPFPPP (99 aa). The segment covering 24 to 56 has biased composition (low complexity); the sequence is TRVAEAAAAPAKPASPAPSAAAAAAAPAKPGTP. Positions 74-85 are enriched in polar residues; sequence YKGSPANSSVAS. The Protein kinase domain occupies 147 to 409; sequence YELGREVGRG…AAQALCHPWI (263 aa). ATP is bound by residues 153–161 and Lys179; that span reads VGRGHFGYT. The Proton acceptor role is filled by Asp275.

It belongs to the protein kinase superfamily. Ser/Thr protein kinase family. Post-translationally, autophosphorylated. In terms of tissue distribution, highly expressed in roots in the zone of cell division. Expressed in leaf mesophyll cells and at lower levels in mature stems.

It carries out the reaction L-seryl-[protein] + ATP = O-phospho-L-seryl-[protein] + ADP + H(+). The enzyme catalyses L-threonyl-[protein] + ATP = O-phospho-L-threonyl-[protein] + ADP + H(+). Activated by the binding of calmodulin-like protein 1 (CML1) in the presence of Ca(2+). In terms of biological role, possesses kinase activity in vitro. The polypeptide is Calcium/calmodulin-dependent serine/threonine-protein kinase 1 (CAMK1) (Oryza sativa subsp. japonica (Rice)).